A 307-amino-acid chain; its full sequence is UDP-N-acetylenolpyruvoylglucosamine reductase (307 aa).

The 164-residue stretch at V34 to G197 folds into the FAD-binding PCMH-type domain. Residue R177 is part of the active site. Residue S226 is the Proton donor of the active site. The active site involves E296.

The protein belongs to the MurB family. Requires FAD as cofactor.

The protein resides in the cytoplasm. It carries out the reaction UDP-N-acetyl-alpha-D-muramate + NADP(+) = UDP-N-acetyl-3-O-(1-carboxyvinyl)-alpha-D-glucosamine + NADPH + H(+). It functions in the pathway cell wall biogenesis; peptidoglycan biosynthesis. Cell wall formation. The sequence is that of UDP-N-acetylenolpyruvoylglucosamine reductase from Paramagnetospirillum magneticum (strain ATCC 700264 / AMB-1) (Magnetospirillum magneticum).